Reading from the N-terminus, the 242-residue chain is N-alpha-acetyltransferase 60 (242 aa).

Topologically, residues M1–D192 are cytoplasmic. Positions V13–N182 constitute an N-acetyltransferase domain. Y38 lines the substrate pocket. K79 bears the N6-acetyllysine; by autocatalysis mark. The active site involves Y97. Residue L99 coordinates substrate. L101–V103 contributes to the acetyl-CoA binding site. 3 positions are modified to N6-acetyllysine; by autocatalysis: K105, K109, and K121. K109–S114 is a binding site for acetyl-CoA. H138 is an active-site residue. Acetyl-CoA is bound by residues N143 and Y150 to R153. A required for homodimerization region spans residues P162–D173. Y165 serves as a coordination point for substrate. The helical intramembrane region spans Y193–I236. Over E237–M242 the chain is Cytoplasmic.

Belongs to the acetyltransferase family. NAA60 subfamily. In terms of assembly, monomer and homodimer; monomer in presence of substrate and homodimer in its absence. Acetylated: autoacetylation is required for optimal acetyltransferase activity.

It is found in the golgi apparatus membrane. It carries out the reaction N-terminal L-methionyl-[transmembrane protein] + acetyl-CoA = N-terminal N(alpha)-acetyl-L-methionyl-[transmembrane protein] + CoA + H(+). The catalysed reaction is L-lysyl-[protein] + acetyl-CoA = N(6)-acetyl-L-lysyl-[protein] + CoA + H(+). Its function is as follows. N-alpha-acetyltransferase that specifically mediates the acetylation of N-terminal residues of the transmembrane proteins, with a strong preference for N-termini facing the cytosol. Displays N-terminal acetyltransferase activity towards a range of N-terminal sequences including those starting with Met-Lys, Met-Val, Met-Ala and Met-Met. Required for normal chromosomal segregation during anaphase. May also show histone acetyltransferase activity; such results are however unclear in vivo and would require additional experimental evidences. The protein is N-alpha-acetyltransferase 60 (Naa60) of Rattus norvegicus (Rat).